The sequence spans 311 residues: Formimidoylglutamase (311 aa).

Mn(2+)-binding residues include H122, D151, H153, D155, C242, and D244.

This sequence belongs to the arginase family. Requires Mn(2+) as cofactor.

It carries out the reaction N-formimidoyl-L-glutamate + H2O = formamide + L-glutamate. The protein operates within amino-acid degradation; L-histidine degradation into L-glutamate; L-glutamate from N-formimidoyl-L-glutamate (hydrolase route): step 1/1. Functionally, catalyzes the conversion of N-formimidoyl-L-glutamate to L-glutamate and formamide. The chain is Formimidoylglutamase from Pseudomonas paraeruginosa (strain DSM 24068 / PA7) (Pseudomonas aeruginosa (strain PA7)).